The primary structure comprises 550 residues: 4-coumarate--CoA ligase-like 8 (550 aa).

The ATP site is built by S207, S208, G209, T210, T211, and K215. F253 is a (E)-4-coumaroyl-AMP binding site. A CoA-binding site is contributed by R274. Residues 276 to 347 (DLGEMMAAVE…KKYPTVDVYQ (72 aa)) are SBD1. (E)-4-coumaroyl-AMP is bound by residues G325, Q347, G348, and T352. Residues Q347, G348, T352, D430, and R445 each coordinate ATP. The segment at 348–412 (GYALTESNGA…LKGPSIAKGY (65 aa)) is SBD2. Positions 447 and 451 each coordinate (E)-4-coumaroyl-AMP. Residues K453 and G454 each coordinate CoA. K536 serves as a coordination point for ATP. The Microbody targeting signal signature appears at 548–550 (SKI).

It belongs to the ATP-dependent AMP-binding enzyme family. Mg(2+) serves as cofactor.

It localises to the peroxisome. The catalysed reaction is (E)-4-coumarate + ATP + CoA = (E)-4-coumaroyl-CoA + AMP + diphosphate. The enzyme catalyses (E)-4-coumarate + ATP + H(+) = (E)-4-coumaroyl-AMP + diphosphate. It catalyses the reaction (E)-4-coumaroyl-AMP + CoA = (E)-4-coumaroyl-CoA + AMP + H(+). Functionally, carboxylate--CoA ligase that may use 4-coumarate as substrate. Follows a two-step reaction mechanism, wherein the carboxylate substrate first undergoes adenylation by ATP, followed by a thioesterification in the presence of CoA to yield the final CoA thioester. The sequence is that of 4-coumarate--CoA ligase-like 8 from Arabidopsis thaliana (Mouse-ear cress).